The primary structure comprises 128 residues: MQRHMLKSKIHRAAVTHCELHYEGSCAIDEDLLEAANIVENERIDIWNINNGERFSTYAIKGERGSGMISLNGSAARRAQLGDLVIIAAFAMVEEAELQAGWKPKLVFIDEGNKIKGHRDHVPTQTWT.

The active-site Schiff-base intermediate with substrate; via pyruvic acid is Ser-25. Residue Ser-25 is modified to Pyruvic acid (Ser). Residue Thr-57 coordinates substrate. Tyr-58 functions as the Proton donor in the catalytic mechanism. Residue 73 to 75 (GSA) participates in substrate binding.

Belongs to the PanD family. As to quaternary structure, heterooctamer of four alpha and four beta subunits. Pyruvate is required as a cofactor. In terms of processing, is synthesized initially as an inactive proenzyme, which is activated by self-cleavage at a specific serine bond to produce a beta-subunit with a hydroxyl group at its C-terminus and an alpha-subunit with a pyruvoyl group at its N-terminus.

It is found in the cytoplasm. The enzyme catalyses L-aspartate + H(+) = beta-alanine + CO2. It functions in the pathway cofactor biosynthesis; (R)-pantothenate biosynthesis; beta-alanine from L-aspartate: step 1/1. Catalyzes the pyruvoyl-dependent decarboxylation of aspartate to produce beta-alanine. The sequence is that of Aspartate 1-decarboxylase from Burkholderia multivorans (strain ATCC 17616 / 249).